The primary structure comprises 694 residues: Elongation factor G (694 aa).

A tr-type G domain is found at 8-285 (EKVRNIGIAA…AVVELLPSPQ (278 aa)). GTP-binding positions include 17 to 24 (AHIDAGKT), 81 to 85 (DTPGH), and 135 to 138 (NKMD).

This sequence belongs to the TRAFAC class translation factor GTPase superfamily. Classic translation factor GTPase family. EF-G/EF-2 subfamily.

Its subcellular location is the cytoplasm. In terms of biological role, catalyzes the GTP-dependent ribosomal translocation step during translation elongation. During this step, the ribosome changes from the pre-translocational (PRE) to the post-translocational (POST) state as the newly formed A-site-bound peptidyl-tRNA and P-site-bound deacylated tRNA move to the P and E sites, respectively. Catalyzes the coordinated movement of the two tRNA molecules, the mRNA and conformational changes in the ribosome. The sequence is that of Elongation factor G (fusA) from Synechococcus sp. (strain ATCC 27144 / PCC 6301 / SAUG 1402/1) (Anacystis nidulans).